A 135-amino-acid polypeptide reads, in one-letter code: Interleukin-4 (135 aa).

The first 24 residues, 1–24 (MGLTSQLIPALVCLLVCTSHFVHG), serve as a signal peptide directing secretion. 2 disulfide bridges follow: C48–C85 and C70–C105. N-linked (GlcNAc...) asparagine glycosylation is found at N62 and N96.

Belongs to the IL-4/IL-13 family.

It localises to the secreted. Functionally, participates in at least several B-cell activation processes as well as of other cell types. It is a costimulator of DNA-synthesis. It induces the expression of class II MHC molecules on resting B-cells. It enhances both secretion and cell surface expression of IgE and IgG1. It also regulates the expression of the low affinity Fc receptor for IgE (CD23) on both lymphocytes and monocytes. Positively regulates IL31RA expression in macrophages. Stimulates autophagy in dendritic cells by interfering with mTORC1 signaling and through the induction of RUFY4. The polypeptide is Interleukin-4 (IL4) (Ovis aries (Sheep)).